We begin with the raw amino-acid sequence, 121 residues long: Parathyroid hormone 4 (121 aa).

Positions 1–24 are cleaved as a signal peptide; that stretch reads MLKMQRSQQRVALMMLMVVAAVHC. The propeptide occupies 25–29; sequence QESES. A disordered region spans residues 77-97; sequence RSRGAQLYSQPGREESSGGQK.

Belongs to the parathyroid hormone family. As to expression, specifically expressed in a bilateral cluster of neurons in the dorsal region of the periventricular hypothalamus. Their axons project through the midbrain and hindbrain and down the spinal cord.

The protein localises to the secreted. In terms of biological role, neuroendocrine peptide which is produced by a subset of neurons in the hypothalamus. Activates the G-protein coupled receptors pth1ra, pth1rb and pth2r with similar affinity. Receptor binding stimulates intracellular cAMP production. Plays a role in bone mineralization by regulating expression of factors involved in phosphate homeostasis. Important for embryonic bone development. The polypeptide is Parathyroid hormone 4 (Danio rerio (Zebrafish)).